The following is a 280-amino-acid chain: Pantothenate synthetase (280 aa).

Met26–His33 provides a ligand contact to ATP. The Proton donor role is filled by His33. Residue Gln57 coordinates (R)-pantoate. Residue Gln57 coordinates beta-alanine. Gly145 to Asp148 is an ATP binding site. A (R)-pantoate-binding site is contributed by Gln151. ATP is bound by residues Val174 and Leu182–Arg185.

It belongs to the pantothenate synthetase family. As to quaternary structure, homodimer.

Its subcellular location is the cytoplasm. The enzyme catalyses (R)-pantoate + beta-alanine + ATP = (R)-pantothenate + AMP + diphosphate + H(+). It functions in the pathway cofactor biosynthesis; (R)-pantothenate biosynthesis; (R)-pantothenate from (R)-pantoate and beta-alanine: step 1/1. Its function is as follows. Catalyzes the condensation of pantoate with beta-alanine in an ATP-dependent reaction via a pantoyl-adenylate intermediate. This chain is Pantothenate synthetase, found in Bordetella bronchiseptica (strain ATCC BAA-588 / NCTC 13252 / RB50) (Alcaligenes bronchisepticus).